The chain runs to 384 residues: WD repeat-containing protein 74 (384 aa).

WD repeat units follow at residues 40–80 (RREE…FLSQ), 83–122 (CPGG…ASSD), 128–168 (KVGP…EPVF), 179–220 (DLRV…RRPV), 224–266 (TYGE…GCLK), and 267–306 (GLAG…GLEH). A Phosphoserine modification is found at serine 214. The residue at position 311 (lysine 311) is an N6-methyllysine. The tract at residues 320–384 (SGRDNWEDEP…KKKRPGSTSP (65 aa)) is required for nucleolar and nuclear location. The segment at 323–384 (DNWEDEPQEP…KKKRPGSTSP (62 aa)) is disordered. A compositionally biased stretch (basic residues) spans 371-384 (QRRKKKKRPGSTSP).

Isoform 1 interacts (through WDR repeats) with NVL; the interaction is independent of RNA or pre-60S ribosome particles. Isoform 2 does not interact with NVL. Interacts with MTREX; the interaction dissociation in a late stage of rRNA synthesis is required for appropriate maturation of pre-60S particles and depends on the ATPase activity of NVL.

The protein resides in the nucleus. Its subcellular location is the nucleolus. In terms of biological role, regulatory protein of the MTREX-exosome complex involved in the synthesis of the 60S ribosomal subunit. Participates in an early cleavage of the pre-rRNA processing pathway in cooperation with NVL. Required for blastocyst formation, is necessary for RNA transcription, processing and/or stability during preimplantation development. The protein is WD repeat-containing protein 74 (Wdr74) of Mus musculus (Mouse).